The following is a 74-amino-acid chain: RNA-binding protein Hfq (74 aa).

One can recognise a Sm domain in the interval 9 to 69 (DQYLNQLRKN…ISTFSPVKNV (61 aa)).

It belongs to the Hfq family. As to quaternary structure, homohexamer.

Its function is as follows. RNA chaperone that binds small regulatory RNA (sRNAs) and mRNAs to facilitate mRNA translational regulation in response to envelope stress, environmental stress and changes in metabolite concentrations. Also binds with high specificity to tRNAs. The sequence is that of RNA-binding protein Hfq from Oceanobacillus iheyensis (strain DSM 14371 / CIP 107618 / JCM 11309 / KCTC 3954 / HTE831).